Here is an 88-residue protein sequence, read N- to C-terminus: Cell division topological specificity factor (88 aa).

It belongs to the MinE family.

Functionally, prevents the cell division inhibition by proteins MinC and MinD at internal division sites while permitting inhibition at polar sites. This ensures cell division at the proper site by restricting the formation of a division septum at the midpoint of the long axis of the cell. The chain is Cell division topological specificity factor from Escherichia fergusonii (strain ATCC 35469 / DSM 13698 / CCUG 18766 / IAM 14443 / JCM 21226 / LMG 7866 / NBRC 102419 / NCTC 12128 / CDC 0568-73).